The following is a 93-amino-acid chain: DNA-directed RNA polymerase subunit omega (93 aa).

The protein belongs to the RNA polymerase subunit omega family. The RNAP catalytic core consists of 2 alpha, 1 beta, 1 beta' and 1 omega subunit. When a sigma factor is associated with the core the holoenzyme is formed, which can initiate transcription.

The catalysed reaction is RNA(n) + a ribonucleoside 5'-triphosphate = RNA(n+1) + diphosphate. Promotes RNA polymerase assembly. Latches the N- and C-terminal regions of the beta' subunit thereby facilitating its interaction with the beta and alpha subunits. This chain is DNA-directed RNA polymerase subunit omega, found in Actinobacillus pleuropneumoniae serotype 3 (strain JL03).